Reading from the N-terminus, the 102-residue chain is MYAVIKTGGKQYRVAEGQKLRVEKLVGNAGDKVTFSEVLLVGGDSPKIGKPLVSGASVAAEITGQDRGKKIVVFKFRRRKNYRRKNGHRQPYTELKITGITA.

This sequence belongs to the bacterial ribosomal protein bL21 family. In terms of assembly, part of the 50S ribosomal subunit. Contacts protein L20.

Its function is as follows. This protein binds to 23S rRNA in the presence of protein L20. This chain is Large ribosomal subunit protein bL21, found in Sorangium cellulosum (strain So ce56) (Polyangium cellulosum (strain So ce56)).